The sequence spans 196 residues: Holliday junction branch migration complex subunit RuvA (196 aa).

Positions 1–64 are domain I; that stretch reads MIDRLRGQLV…EDAMLLFGFA (64 aa). Residues 65–143 form a domain II region; sequence TREEREAFDA…AAAGGGGGVA (79 aa). The segment at 144–153 is flexible linker; sequence AGEGDGPFME. Residues 153-196 form a domain III region; that stretch reads EAREALTGLGYSLEEAERALRDVPPQETVEQYIKAALRKIGGRR.

Belongs to the RuvA family. Homotetramer. Forms an RuvA(8)-RuvB(12)-Holliday junction (HJ) complex. HJ DNA is sandwiched between 2 RuvA tetramers; dsDNA enters through RuvA and exits via RuvB. An RuvB hexamer assembles on each DNA strand where it exits the tetramer. Each RuvB hexamer is contacted by two RuvA subunits (via domain III) on 2 adjacent RuvB subunits; this complex drives branch migration. In the full resolvosome a probable DNA-RuvA(4)-RuvB(12)-RuvC(2) complex forms which resolves the HJ.

It localises to the cytoplasm. Functionally, the RuvA-RuvB-RuvC complex processes Holliday junction (HJ) DNA during genetic recombination and DNA repair, while the RuvA-RuvB complex plays an important role in the rescue of blocked DNA replication forks via replication fork reversal (RFR). RuvA specifically binds to HJ cruciform DNA, conferring on it an open structure. The RuvB hexamer acts as an ATP-dependent pump, pulling dsDNA into and through the RuvAB complex. HJ branch migration allows RuvC to scan DNA until it finds its consensus sequence, where it cleaves and resolves the cruciform DNA. This is Holliday junction branch migration complex subunit RuvA from Rubrobacter xylanophilus (strain DSM 9941 / JCM 11954 / NBRC 16129 / PRD-1).